Here is a 529-residue protein sequence, read N- to C-terminus: GMP synthase [glutamine-hydrolyzing] (529 aa).

The 190-residue stretch at 16–205 folds into the Glutamine amidotransferase type-1 domain; sequence PVLVVDFGAQ…LHDFAGLDAD (190 aa). Catalysis depends on C93, which acts as the Nucleophile. Residues H179 and E181 contribute to the active site. A GMPS ATP-PPase domain is found at 206 to 403; that stretch reads WTAANIAGVL…LDLPEEIVAR (198 aa). Residue 233 to 239 participates in ATP binding; that stretch reads SGGVDSA.

Homodimer.

The catalysed reaction is XMP + L-glutamine + ATP + H2O = GMP + L-glutamate + AMP + diphosphate + 2 H(+). Its pathway is purine metabolism; GMP biosynthesis; GMP from XMP (L-Gln route): step 1/1. Functionally, catalyzes the synthesis of GMP from XMP. The polypeptide is GMP synthase [glutamine-hydrolyzing] (Mycobacterium leprae (strain Br4923)).